Reading from the N-terminus, the 519-residue chain is Maturase K (519 aa).

The protein belongs to the intron maturase 2 family. MatK subfamily.

The protein localises to the plastid. The protein resides in the chloroplast. Its function is as follows. Usually encoded in the trnK tRNA gene intron. Probably assists in splicing its own and other chloroplast group II introns. In Keteleeria davidiana (David's keteleeria), this protein is Maturase K.